The sequence spans 103 residues: Small ribosomal subunit protein uS10 (103 aa).

The protein belongs to the universal ribosomal protein uS10 family. Part of the 30S ribosomal subunit.

In terms of biological role, involved in the binding of tRNA to the ribosomes. The polypeptide is Small ribosomal subunit protein uS10 (Chlorobium chlorochromatii (strain CaD3)).